The chain runs to 546 residues: Probable protein kinase UbiB (546 aa).

Residues 124-502 (DFSVEPLASA…HVRQGQSRYL (379 aa)) form the Protein kinase domain. Residues 130-138 (LASASIAQV) and Lys153 each bind ATP. The active-site Proton acceptor is Asp288. 2 helical membrane passes run 501-521 (YLFGIGAVLLLSGTLLFIHRP) and 522-542 (EWGMMPGWLMAGGVVTWLIGW).

Belongs to the ABC1 family. UbiB subfamily.

The protein localises to the cell inner membrane. Its pathway is cofactor biosynthesis; ubiquinone biosynthesis [regulation]. In terms of biological role, is probably a protein kinase regulator of UbiI activity which is involved in aerobic coenzyme Q (ubiquinone) biosynthesis. In Klebsiella pneumoniae subsp. pneumoniae (strain ATCC 700721 / MGH 78578), this protein is Probable protein kinase UbiB.